Consider the following 283-residue polypeptide: MSGTGQSHAADAAPDSDPGQAAVALAYQHFEPRAYLRNNYAPPRGDLSSPDGVGPWKLRCLAQTFATGEVSGRALIDIGSGPTIYQLLSACAHFEDITMTDFLEVNRQELGLWLREEPGAFDWSVYSQHVCLIEGKGESCQEKERQLRARVKRILPIDVHQPQPLGTGSLAPLPADALVSAFCLEAVSPDLASFQRALDHITTLLRSGGHLLLIGALEESWYLAGEARLAVVPVCEEEVREALARSGYEVRDLRTYVMPAHLRTGVDDVKGIFFAWAQKKVGV.

At serine 7 the chain carries Phosphoserine. S-adenosyl-L-methionine-binding positions include tyrosine 35, tyrosine 40, 79–80 (GS), tyrosine 85, aspartate 101, asparagine 106, 158–159 (DV), and alanine 181. 2 residues coordinate octopamine: glutamate 219 and aspartate 267.

The protein belongs to the class I-like SAM-binding methyltransferase superfamily. NNMT/PNMT/TEMT family.

The catalysed reaction is phenylethanolamine + S-adenosyl-L-methionine = N-methylphenylethanolamine + S-adenosyl-L-homocysteine + H(+). It carries out the reaction (R)-noradrenaline + S-adenosyl-L-methionine = (R)-adrenaline + S-adenosyl-L-homocysteine + H(+). The enzyme catalyses (R)-normetanephrine + S-adenosyl-L-methionine = (R)-metanephrine + S-adenosyl-L-homocysteine + H(+). It catalyses the reaction (R)-octopamine + S-adenosyl-L-methionine = (R)-synephrine + S-adenosyl-L-homocysteine + H(+). The protein operates within catecholamine biosynthesis; (R)-adrenaline biosynthesis; (R)-adrenaline from (R)-noradrenaline: step 1/1. In terms of biological role, catalyzes the transmethylation of nonepinephrine (noradrenaline) to form epinephrine (adrenaline), using S-adenosyl-L-methionine as the methyl donor. Other substrates include phenylethanolamine, octopamine and normetanephrine. The polypeptide is Phenylethanolamine N-methyltransferase (PNMT) (Sus scrofa (Pig)).